A 270-amino-acid chain; its full sequence is Protein-ADP-ribose hydrolase (270 aa).

The 195-residue stretch at 73 to 267 (VSVKDCQKTN…LYDTYLQKEN (195 aa)) folds into the Macro domain. D92, I93, and N106 together coordinate ADP-D-ribose. Zn(2+) is bound by residues C112, H117, and C119. ADP-D-ribose contacts are provided by C119, I120, D121, S212, T213, G214, E215, and F216.

The protein belongs to the MacroD-type family. Zn-Macro subfamily. Zn(2+) serves as cofactor.

The catalysed reaction is 4-O-(ADP-D-ribosyl)-L-aspartyl-[protein] + H2O = L-aspartyl-[protein] + ADP-D-ribose + H(+). Functionally, ADP-ribosylhydrolase that specifically reverses the SirTM-mediated mono-ADP-ribosylation at an asparatate residue of GcvH-L, by releasing ADP-ribose from the target protein. May play a role in the regulation of the response to host-induced oxidative stress. This is Protein-ADP-ribose hydrolase from Streptococcus pyogenes serotype M18 (strain MGAS8232).